The following is a 259-amino-acid chain: Small ribosomal subunit protein uS2 (259 aa).

The disordered stretch occupies residues G224–D259. Residues D238–L248 show a composition bias toward acidic residues. Over residues D250 to D259 the composition is skewed to polar residues.

This sequence belongs to the universal ribosomal protein uS2 family.

The chain is Small ribosomal subunit protein uS2 from Limosilactobacillus fermentum (strain NBRC 3956 / LMG 18251) (Lactobacillus fermentum).